Consider the following 305-residue polypeptide: Methionyl-tRNA formyltransferase (305 aa).

Ser110–Pro113 is a binding site for (6S)-5,6,7,8-tetrahydrofolate.

Belongs to the Fmt family.

It carries out the reaction L-methionyl-tRNA(fMet) + (6R)-10-formyltetrahydrofolate = N-formyl-L-methionyl-tRNA(fMet) + (6S)-5,6,7,8-tetrahydrofolate + H(+). Functionally, attaches a formyl group to the free amino group of methionyl-tRNA(fMet). The formyl group appears to play a dual role in the initiator identity of N-formylmethionyl-tRNA by promoting its recognition by IF2 and preventing the misappropriation of this tRNA by the elongation apparatus. The sequence is that of Methionyl-tRNA formyltransferase from Ureaplasma parvum serovar 3 (strain ATCC 700970).